Reading from the N-terminus, the 188-residue chain is VQ motif-containing protein 18 (188 aa).

Disordered stretches follow at residues 1–20, 58–92, and 157–188; these read MEIT…VSMN, LTGK…HQPV, and GFIF…HNSS. Positions 51 to 60 match the VQ motif; that stretch reads FRSLVQSLTG. Residues 161–179 are compositionally biased toward low complexity; sequence NNNNNNNNNNNNNNNNNTN.

The protein resides in the nucleus. Its function is as follows. May function as positive regulator of plant growth. This is VQ motif-containing protein 18 from Arabidopsis thaliana (Mouse-ear cress).